A 174-amino-acid chain; its full sequence is 2-C-methyl-D-erythritol 2,4-cyclodiphosphate synthase (174 aa).

Residues Asp13, His15, and His61 each contribute to the a divalent metal cation site. 4-CDP-2-C-methyl-D-erythritol 2-phosphate is bound at residue 13-15 (DAH). Residues 75–77 (DIG), 149–152 (TTTD), Phe156, and His159 contribute to the 4-CDP-2-C-methyl-D-erythritol 2-phosphate site.

Belongs to the IspF family. Homotrimer. A divalent metal cation is required as a cofactor.

It catalyses the reaction 4-CDP-2-C-methyl-D-erythritol 2-phosphate = 2-C-methyl-D-erythritol 2,4-cyclic diphosphate + CMP. The protein operates within isoprenoid biosynthesis; isopentenyl diphosphate biosynthesis via DXP pathway; isopentenyl diphosphate from 1-deoxy-D-xylulose 5-phosphate: step 4/6. In terms of biological role, involved in the biosynthesis of isopentenyl diphosphate (IPP) and dimethylallyl diphosphate (DMAPP), two major building blocks of isoprenoid compounds. Catalyzes the conversion of 4-diphosphocytidyl-2-C-methyl-D-erythritol 2-phosphate (CDP-ME2P) to 2-C-methyl-D-erythritol 2,4-cyclodiphosphate (ME-CPP) with a corresponding release of cytidine 5-monophosphate (CMP). In Bifidobacterium longum (strain NCC 2705), this protein is 2-C-methyl-D-erythritol 2,4-cyclodiphosphate synthase.